The following is a 1069-amino-acid chain: RE1-silencing transcription factor (1069 aa).

The interaction with SIN3A stretch occupies residues 32–121 (DLHDLSKAEL…SLELSVVEPQ (90 aa)). Residues 43-57 (APQLIMLANVALTGE) are interaction with SIN3B. The segment at 85–104 (SDSEGEGLEESAELKGDPSG) is disordered. Positions 144-417 (PVAEDKCKNL…KSKHPTCPSK (274 aa)) are interaction with ZFP90. The segment at 158 to 180 (FRCKPCQYEAESEEQFVHHIRVH) adopts a C2H2-type 1 zinc-finger fold. The required for binding to the neuron-restrictive silencer element stretch occupies residues 200–211 (SGASPSEEGEFS). 7 consecutive C2H2-type zinc fingers follow at residues 215-237 (IRCDRCGYNTNRYDHYTAHLKHH), 247-269 (YKCIICTYTTVSEYHWRKHLRNH), 275-297 (YTCSKCNYFSTEKNNYVQHVRTH), 303-325 (YKCELCPYSSSQKTHLTRHMRTH), 331-354 (FKCDQCNYVASNQHEVTRHARQVH), 360-382 (LNCPHCDYKTADRSNFKKHVELH), and 388-411 (FNCPVCDYAASKKCNLQYHFKSKH). 2 disordered regions span residues 425–737 (KLKK…MELP) and 830–1022 (KASK…GKEG). Positions 451 to 482 (EQAKTKGVDASARRSERPVKGVGKDVPKEKKP) are enriched in basic and acidic residues. Residues 484–493 (SNASVVQVTT) show a composition bias toward polar residues. Basic and acidic residues-rich tracts occupy residues 498 to 511 (SAVETKAAEGKHTD) and 554 to 576 (ESKPKTSGEVPKGSRVEDRKADK). A compositionally biased stretch (basic residues) spans 584-600 (KGGKKTALKTKTAKKGS). Residues 630 to 643 (AVVTPSGSTQTELS) are compositionally biased toward polar residues. 2 stretches are compositionally biased toward pro residues: residues 679–706 (PSPPQEPPQVEPPACVEPPPPVEPPCPM) and 713–734 (PSPPMEPSQVEPPPHLEPPLPM). Composition is skewed to basic and acidic residues over residues 851–860 (RREETPKDQE) and 876–886 (GGTEEAGESRA). Residues 894–904 (STSALSSEQSS) are compositionally biased toward low complexity. Positions 930-943 (TEQKTDRVPLKDSA) are enriched in basic and acidic residues. Ser948 is subject to Phosphoserine. Positions 957-968 (EAAAPAVVASPP) are enriched in low complexity. Residues 981–1059 (EGIHSHDGSD…HLNRHLVNVY (79 aa)) form an interaction with RCOR1 region. A C2H2-type 9 zinc finger spans residues 1032-1054 (FVCIFCDRSFRKEKDYSKHLNRH).

Isoform 1 and isoform 6 form heterodimers. Isoform 6: Forms homodimers and homooligomers; binds to the neuron-restrictive silencer element (NRSE) as monomer. Interacts with SIN3A, SIN3B and RCOR1. Interacts with CDYL. Interacts with EHMT1 and EHMT2 only in the presence of CDYL. Part of a complex containing at least CDYL, REST, WIZ, SETB1, EHMT1 and EHMT2. Interacts (via zinc-finger DNA-binding domain) with ZFP90 (via N- and C-termini); the interaction inhibits REST repressor activity. Interacts (via C2H2-type zinc finger 5) with PRICKLE1. Interacts with FBXW11 and BTRC. Interacts with USP7. Post-translationally, O-glycosylated. In terms of processing, phosphorylated; phosphorylation is required for ubiquitination. Ubiquitinated; ubiquitination is mediated by BTRC and leads to proteasomal degradation in G2 phase. Ubiquitination increases during neuronal differentiation. Deubiquitinated by USP7; leading to its stabilization and promoting the maintenance of neural progenitor cells. As to expression, expressed in the hippocampus including the granule cell layer of the dentate gyrus, the pyramidal cell layers of CA1 and CA3, the apical and basilar dendrite layers of the stratum radiatum and stratum oriens of CA1, the stratum lucidum and stratum oriens of CA3 and in astroglia (at protein level). Expressed in the brain, with the highest levels in the neurons of hippocampus, pons/medulla and midbrain.

The protein localises to the nucleus. It is found in the cytoplasm. Transcriptional repressor which binds neuron-restrictive silencer element (NRSE) and represses neuronal gene transcription in non-neuronal cells. Restricts the expression of neuronal genes by associating with two distinct corepressors, SIN3A and RCOR1, which in turn recruit histone deacetylase to the promoters of REST-regulated genes. Mediates repression by recruiting the BHC complex at RE1/NRSE sites which acts by deacetylating and demethylating specific sites on histones, thereby acting as a chromatin modifier. Transcriptional repression by REST-CDYL via the recruitment of histone methyltransferase EHMT2 may be important in transformation suppression. Represses the expression of SRRM4 in non-neural cells to prevent the activation of neural-specific splicing events and to prevent production of REST isoform 6. Repressor activity may be inhibited by forming heterodimers with isoform 6, thereby preventing binding to NRSE or binding to corepressors and leading to derepression of target genes. Also maintains repression of neuronal genes in neural stem cells, and allows transcription and differentiation into neurons by dissociation from RE1/NRSE sites of target genes. Thereby is involved in maintaining the quiescent state of adult hippocampal neural stem cells and preventing premature differentiation into mature neurons. Plays a role in the developmental switch in synaptic NMDA receptor composition during postnatal development, by repressing GRIN2B expression and thereby altering NMDA receptor properties from containing primarily GRIN2B to primarily GRIN2A subunits. Acts as a regulator of osteoblast differentiation. Key repressor of gene expression in hypoxia; represses genes in hypoxia by direct binding to an RE1/NRSE site on their promoter regions. May also function in stress resistance in the brain during aging; possibly by regulating expression of genes involved in cell death and in the stress response. Repressor of gene expression in the hippocampus after ischemia by directly binding to RE1/NRSE sites and recruiting SIN3A and RCOR1 to promoters of target genes, thereby promoting changes in chromatin modifications and ischemia-induced cell death. After ischemia, might play a role in repression of miR-132 expression in hippocampal neurons, thereby leading to neuronal cell death. Functionally, binds to the 3' region of the neuron-restrictive silencer element (NRSE), with lower affinity than full-length REST isoform 1. Exhibits weaker repressor activity compared to isoform 1. May negatively regulate the repressor activity of isoform 1 by binding to isoform 1, thereby preventing its binding to NRSE and leading to derepression of target genes. However, in another study, does not appear to be implicated in repressor activity of a NRSE motif-containing reporter construct nor in inhibitory activity on the isoform 1 transcriptional repressor activity. Post-transcriptional inactivation of REST by SRRM4-dependent alternative splicing into isoform 6 is required in mechanosensory hair cells in the inner ear for derepression of neuronal genes and hearing. In Rattus norvegicus (Rat), this protein is RE1-silencing transcription factor (Rest).